We begin with the raw amino-acid sequence, 735 residues long: Catalase-peroxidase (735 aa).

2 stretches are compositionally biased toward polar residues: residues 1 to 10 and 17 to 26; these read MENQNRQNAA and SVTNQSSNRT. Residues 1-30 form a disordered region; sequence MENQNRQNAAQCPFHGSVTNQSSNRTTNKD. The segment at residues 100 to 223 is a cross-link (tryptophyl-tyrosyl-methioninium (Trp-Tyr) (with M-249)); sequence WHSAGTYRIG…LAAVQMGLIY (124 aa). The Proton acceptor role is filled by histidine 101. Residues 223 to 249 constitute a cross-link (tryptophyl-tyrosyl-methioninium (Tyr-Met) (with W-100)); that stretch reads YVNPEGPDGKPDPKAAARDIRETFRRM. Histidine 264 contributes to the heme b binding site.

Belongs to the peroxidase family. Peroxidase/catalase subfamily. In terms of assembly, homodimer or homotetramer. Heme b serves as cofactor. In terms of processing, formation of the three residue Trp-Tyr-Met cross-link is important for the catalase, but not the peroxidase activity of the enzyme.

The enzyme catalyses H2O2 + AH2 = A + 2 H2O. The catalysed reaction is 2 H2O2 = O2 + 2 H2O. In terms of biological role, bifunctional enzyme with both catalase and broad-spectrum peroxidase activity. Also displays NADH oxidase, INH lyase and isonicotinoyl-NAD synthase activities. This chain is Catalase-peroxidase, found in Geobacillus stearothermophilus (Bacillus stearothermophilus).